We begin with the raw amino-acid sequence, 413 residues long: E3 ubiquitin-protein ligase makorin (413 aa).

2 consecutive C3H1-type zinc fingers follow at residues 2–29 and 30–57; these read PRHE…HDVA and TRNE…HTRP. The disordered stretch occupies residues 61–85; sequence ELPSCSTPQTSQNQQNLQNSGQRVR. A compositionally biased stretch (low complexity) spans 66–82; sequence STPQTSQNQQNLQNSGQ. The C3H1-type 3 zinc finger occupies 138 to 167; the sequence is QAQLMMCPYHQKSGDCNRQDMDCPFAHGNY. Residues 213–267 form an RING-type zinc finger; the sequence is CGICMENIFEKNLRFGILNGCQHCFCLDCIRQWRSKDQENVELATKTVRSCPECR. The segment at 296–327 adopts a C3H1-type 4 zinc-finger fold; that stretch reads NTKRKICKYYSNERSRGACPFGNKCFYKHQLP.

Component of a complex at least containing lep-2, lin-28 and the long non-coding RNA lep-5, which mediates the degradation of lin-28. Expressed in seam, tail tip, and other hypodermal cells, head and tail neurons, the pharynx, intestine and the developing hermaphrodite somatic gonad. Not expressed in body wall muscle cells.

Its subcellular location is the cytoplasm. It catalyses the reaction S-ubiquitinyl-[E2 ubiquitin-conjugating enzyme]-L-cysteine + [acceptor protein]-L-lysine = [E2 ubiquitin-conjugating enzyme]-L-cysteine + N(6)-ubiquitinyl-[acceptor protein]-L-lysine.. It functions in the pathway protein modification; protein ubiquitination. E3 ubiquitin ligase which catalyzes the covalent attachment of ubiquitin moieties onto substrate proteins. Promotes the larval to adult transition by binding to the long non-coding RNA lep-5 to target the heterochronic protein lin-28 for degradation by the proteasome. This association and degradation of lin-28 also controls the timing of the sexual differentiation of individual neurons in males including the AIM, AWA, ADF, ASJ and CEM neurons. Plays a role in governing the developmental timing of male tail tip morphogenesis. Plays a role in two aspects of male mating behavior: response to hermaphrodite contact and vulva location. May play a role in the detection of preferred food sources. The sequence is that of E3 ubiquitin-protein ligase makorin from Caenorhabditis elegans.